Consider the following 315-residue polypeptide: Putative HTH-type transcriptional regulatory protein PF1851 (315 aa).

The 59-residue stretch at 131 to 189 folds into the HTH cro/C1-type domain; sequence LRELREKYGYSTTELAEMLGVSRKSVQRYEKGEGMVSIDVAIRLEEIFDEPLVKPIDIF. The segment at residues 142 to 161 is a DNA-binding region (H-T-H motif); that stretch reads TTELAEMLGVSRKSVQRYEK.

In Pyrococcus furiosus (strain ATCC 43587 / DSM 3638 / JCM 8422 / Vc1), this protein is Putative HTH-type transcriptional regulatory protein PF1851.